Reading from the N-terminus, the 524-residue chain is Coronin-2A (524 aa).

WD repeat units lie at residues 80 to 120 (GHRG…LTRN), 130 to 170 (GHAR…SVIA), 178 to 217 (CHQD…VLQE), 220 to 263 (YKGH…VPLT), and 269 to 308 (GSSG…PHLT). Positions 403–436 (LLDSQTLPPERPLSNSMVQVSPQPLEPMKQPAED) are disordered. Residues 404–424 (LDSQTLPPERPLSNSMVQVSP) show a composition bias toward polar residues. The stretch at 484-523 (QMFYRQQEEIRRLRELLIQREVQTKQLELEIKNLRMALGQ) forms a coiled coil.

This sequence belongs to the WD repeat coronin family. Binds actin. Component of the N-Cor repressor complex, at least composed of NCOR1, NCOR2, HDAC3, TBL1X, TBL1R, CORO2A and GPS2.

The protein is Coronin-2A (Coro2a) of Mus musculus (Mouse).